Reading from the N-terminus, the 311-residue chain is Long form salivary protein D7L1 (311 aa).

A signal peptide spans 1–16 (MKALIFLGAIIAGVLS). Intrachain disulfides connect Cys34–Cys67 and Cys63–Cys120. Residues Ser146, Arg149, Tyr153, and Lys160 each contribute to the ADP site. Disulfide bonds link Cys170–Cys202, Cys183–Cys311, and Cys244–Cys258. Residues Asn281, Tyr282, and Ser283 each coordinate ADP.

This sequence belongs to the PBP/GOBP family. In terms of tissue distribution, distal lateral and medial lobes of female mosquito salivary gland (at protein level). Expressed in the head and thorax of the female mosquitoes, where the salivary glands are located. Expressed in salivary gland. Not detected in the female mosquito abdomen. Not detected in the male mosquito tissues.

It is found in the secreted. Its function is as follows. Modulates blood feeding of female mosquitoes on vertebrate species by binding and sequestering different mediators involved in the host response. Binds adenine, adenosine, AMP, ADP and ATP, with the highest affinity to ATP and ADP. Inhibits agonist-induced platelet aggregation and hemostasis. The sequence is that of Long form salivary protein D7L1 from Culex quinquefasciatus (Southern house mosquito).